A 244-amino-acid chain; its full sequence is MDVLVPLLQLLVLLLTLPLHLLALLGCWQPICKTYFPYLMATLTARSYKKMESKKRELFSQIKDLKGTSNEVTLLELGCGTGANFQFYPPGCKVTCVDPNPNFEKFLTKSMAENRHLQYERFIVAYGENMKQLADSSMDVVVCTLVLCSVQSPRKVLQEVQRVLKPGGLLFFWEHVSEPQGSQALLWQRVLEPTWKHIGDGCHLTRETWKDIEKAQFSEVQLEWQPPPFKWLPVGPHIMGKAVK.

Positions 1–23 (MDVLVPLLQLLVLLLTLPLHLLA) are cleaved as a signal peptide.

The protein belongs to the methyltransferase superfamily. As to expression, highly expressed in liver and kidney. No expression in testis, heart, lung, brain, spleen or cultured fibroblasts.

It localises to the endoplasmic reticulum membrane. The protein localises to the lipid droplet. It is found in the microsome. The protein resides in the cytoplasm. Its subcellular location is the cytosol. The enzyme catalyses a thiol + S-adenosyl-L-methionine = a methyl thioether + S-adenosyl-L-homocysteine + H(+). Its function is as follows. Thiol S-methyltransferase that catalyzes the transfer of a methyl group from S-adenosyl-L-methionine to alkyl and phenolic thiol-containing acceptor substrates. Together with TMT1B accounts for most of S-thiol methylation activity in the endoplasmic reticulum of hepatocytes. Selectively methylates S-centered nucleophiles from metabolites such as hydrogen sulfide and dithiothreitol. In Rattus norvegicus (Rat), this protein is Thiol S-methyltransferase TMT1B (Tmt1b).